Here is a 364-residue protein sequence, read N- to C-terminus: Sulfate/thiosulfate import ATP-binding protein CysA (364 aa).

The ABC transporter domain occupies 3-237; that stretch reads IEIARIKKSF…PATRFVLEFM (235 aa). 35-42 provides a ligand contact to ATP; the sequence is GPSGSGKT.

The protein belongs to the ABC transporter superfamily. Sulfate/tungstate importer (TC 3.A.1.6) family. The complex is composed of two ATP-binding proteins (CysA), two transmembrane proteins (CysT and CysW) and a solute-binding protein (CysP).

It is found in the cell inner membrane. The catalysed reaction is sulfate(out) + ATP + H2O = sulfate(in) + ADP + phosphate + H(+). The enzyme catalyses thiosulfate(out) + ATP + H2O = thiosulfate(in) + ADP + phosphate + H(+). Part of the ABC transporter complex CysAWTP involved in sulfate/thiosulfate import. Responsible for energy coupling to the transport system. The chain is Sulfate/thiosulfate import ATP-binding protein CysA from Salmonella typhi.